Consider the following 470-residue polypeptide: Tert-butanol monooxygenase / tert-amyl alcohol desaturase oxygenase subunit (470 aa).

The region spanning W51–A155 is the Rieske domain. Positions 91, 93, 110, and 113 each coordinate [2Fe-2S] cluster.

This sequence belongs to the bacterial ring-hydroxylating dioxygenase alpha subunit family. As to quaternary structure, this two-component enzyme is composed of an oxygenase (MdpJ) and a reductase (MdpK). Requires [2Fe-2S] cluster as cofactor.

It carries out the reaction tert-butanol + NADPH + O2 + H(+) = 2-methylpropane-1,2-diol + NADP(+) + H2O. The enzyme catalyses 2-methylbutan-2-ol + NADPH + O2 + H(+) = 3-hydroxy-3-methylbut-1-ene + NADP(+) + 2 H2O. Its function is as follows. Oxygenase component of a two-component system involved in the degradation of tertiary alcohols such as tert-butyl alcohol (TBA) and tert-amyl alcohol (TAA). In the presence of TBA, catalyzes the hydroxylation of TBA to 2-methylpropane-1,2-diol. In the presence of TAA, functions as a desaturase, enabling the degradation of TAA and resulting in the formation of the hemiterpene 3-hydroxy-3-methylbut-1-ene. The specificity of the catalysis depends strongly on the molecule structure of the substrate, allowing either hydroxylation or desaturation reactions. Also catalyzes the desaturation of the tertiary alcohol 3-methyl-3-pentanol (a C6 homolog of TBA and TAA) to 3-methyl-1-penten-3-ol, with lower efficiency. In addition, can transform some secondary alcohols, including the hydroxylation of 2-propanol to 1,2-propanediol, and the desaturation of 2-butanol, 3-methyl-2-butanol and 3-pentanol. The sequence is that of Tert-butanol monooxygenase / tert-amyl alcohol desaturase oxygenase subunit from Aquincola tertiaricarbonis.